Reading from the N-terminus, the 83-residue chain is Host transcription reprogramming factor 9 (83 aa).

The N-terminal stretch at methionine 1–alanine 19 is a signal peptide. The C2H2-type zinc finger occupies tyrosine 54–histidine 77.

The protein resides in the secreted. It localises to the host nucleus. Probable secreted effector that translocates into the nuclei of host cells to reprogram the expression of targeted genes by binding on effector binding elements in rice. This chain is Host transcription reprogramming factor 9, found in Pyricularia oryzae (strain 70-15 / ATCC MYA-4617 / FGSC 8958) (Rice blast fungus).